Reading from the N-terminus, the 331-residue chain is 4-hydroxythreonine-4-phosphate dehydrogenase (331 aa).

Substrate is bound by residues H137 and T138. A divalent metal cation contacts are provided by H167, H212, and H267. Substrate is bound by residues K275, N284, and R293.

This sequence belongs to the PdxA family. As to quaternary structure, homodimer. The cofactor is Zn(2+). Requires Mg(2+) as cofactor. Co(2+) is required as a cofactor.

The protein localises to the cytoplasm. The catalysed reaction is 4-(phosphooxy)-L-threonine + NAD(+) = 3-amino-2-oxopropyl phosphate + CO2 + NADH. The protein operates within cofactor biosynthesis; pyridoxine 5'-phosphate biosynthesis; pyridoxine 5'-phosphate from D-erythrose 4-phosphate: step 4/5. Catalyzes the NAD(P)-dependent oxidation of 4-(phosphooxy)-L-threonine (HTP) into 2-amino-3-oxo-4-(phosphooxy)butyric acid which spontaneously decarboxylates to form 3-amino-2-oxopropyl phosphate (AHAP). This Yersinia pestis bv. Antiqua (strain Angola) protein is 4-hydroxythreonine-4-phosphate dehydrogenase.